We begin with the raw amino-acid sequence, 166 residues long: Interferon gamma (166 aa).

The first 23 residues, 1-23 (MKYTSYILAFQLCIVLGSLGCYC), serve as a signal peptide directing secretion. Glutamine 24 is subject to Pyrrolidone carboxylic acid. Residues asparagine 48, asparagine 86, and asparagine 120 are each glycosylated (N-linked (GlcNAc...) asparagine).

It belongs to the type II (or gamma) interferon family. Homodimer. Interacts with IFNGR1 (via extracellular domain); this interaction promotes IFNGR1 dimerization. As to expression, released primarily from activated T lymphocytes.

The protein resides in the secreted. Its function is as follows. Type II interferon produced by immune cells such as T-cells and NK cells that plays crucial roles in antimicrobial, antiviral, and antitumor responses by activating effector immune cells and enhancing antigen presentation. Primarily signals through the JAK-STAT pathway after interaction with its receptor IFNGR1 to affect gene regulation. Upon IFNG binding, IFNGR1 intracellular domain opens out to allow association of downstream signaling components JAK2, JAK1 and STAT1, leading to STAT1 activation, nuclear translocation and transcription of IFNG-regulated genes. Many of the induced genes are transcription factors such as IRF1 that are able to further drive regulation of a next wave of transcription. Plays a role in class I antigen presentation pathway by inducing a replacement of catalytic proteasome subunits with immunoproteasome subunits. In turn, increases the quantity, quality, and repertoire of peptides for class I MHC loading. Increases the efficiency of peptide generation also by inducing the expression of activator PA28 that associates with the proteasome and alters its proteolytic cleavage preference. Up-regulates as well MHC II complexes on the cell surface by promoting expression of several key molecules such as cathepsins B/CTSB, H/CTSH, and L/CTSL. Participates in the regulation of hematopoietic stem cells during development and under homeostatic conditions by affecting their development, quiescence, and differentiation. This Saimiri sciureus (Common squirrel monkey) protein is Interferon gamma (IFNG).